The chain runs to 161 residues: MGNKIAVIPGTFDPITNGHLDIIERAAKIFDVLYVAVLNNSSKKPLFTVEERMEMIKQVTAHLPNVAVESASGLTVDYAAKRGATAIVRGLRAVSDFEYEMQIASMNRTLNAEIETFFVMTNTKYSFLSSSMVKEVAQYQGDISELVPEMVNRAIQVKFNK.

Position 11 (T11) interacts with substrate. ATP is bound by residues 11 to 12 (TF) and H19. 3 residues coordinate substrate: K43, T75, and R89. ATP-binding positions include 90 to 92 (GLR), E100, and 125 to 131 (YSFLSSS).

It belongs to the bacterial CoaD family. Homohexamer. The cofactor is Mg(2+).

It localises to the cytoplasm. The catalysed reaction is (R)-4'-phosphopantetheine + ATP + H(+) = 3'-dephospho-CoA + diphosphate. It participates in cofactor biosynthesis; coenzyme A biosynthesis; CoA from (R)-pantothenate: step 4/5. Functionally, reversibly transfers an adenylyl group from ATP to 4'-phosphopantetheine, yielding dephospho-CoA (dPCoA) and pyrophosphate. This chain is Phosphopantetheine adenylyltransferase, found in Listeria welshimeri serovar 6b (strain ATCC 35897 / DSM 20650 / CCUG 15529 / CIP 8149 / NCTC 11857 / SLCC 5334 / V8).